Consider the following 22-residue polypeptide: RDCCTPPRKCKDRRCKPMKCCA.

3 disulfides stabilise this stretch: C3-C15, C4-C20, and C10-C21. 4-hydroxyproline; partial occurs at positions 6 and 7. P17 carries the post-translational modification 4-hydroxyproline. A22 is modified (alanine amide).

Belongs to the conotoxin M superfamily. In terms of tissue distribution, expressed by the venom duct.

Its subcellular location is the secreted. In terms of biological role, mu-conotoxins block voltage-gated sodium channels (Nav). The protein is Mu-conotoxin GIIIB of Conus geographus (Geography cone).